A 185-amino-acid polypeptide reads, in one-letter code: MNHILLIILIFAALALIFGLLLGFAAIHFKVESDPIVDQLDALLPQTQCGQCGYPGCRPYAEAIANGDSINKCVPGGAQTIQNIADLMGVEPPSDDNELLMAPPKRVAFIHENLCIGCTKCIQACPVDAIIGAPKLMHTILRSECTGCDLCVDPCPTNCIEMIELPATPDRWKWDVETIPVRMVQ.

The hydrophobic stretch occupies residues methionine 1–alanine 26. The 4Fe-4S domain maps to glutamate 32–valine 90. [4Fe-4S] cluster is bound by residues cysteine 49, cysteine 52, cysteine 57, cysteine 73, cysteine 115, cysteine 118, cysteine 121, cysteine 125, cysteine 145, cysteine 148, cysteine 151, and cysteine 155. 4Fe-4S ferredoxin-type domains lie at arginine 106–lysine 135 and leucine 136–leucine 165.

Belongs to the 4Fe4S bacterial-type ferredoxin family. RnfB subfamily. As to quaternary structure, the complex is composed of six subunits: RnfA, RnfB, RnfC, RnfD, RnfE and RnfG. The cofactor is [4Fe-4S] cluster.

It is found in the cell inner membrane. Functionally, part of a membrane-bound complex that couples electron transfer with translocation of ions across the membrane. The chain is Ion-translocating oxidoreductase complex subunit B from Tolumonas auensis (strain DSM 9187 / NBRC 110442 / TA 4).